The primary structure comprises 364 residues: Long-wave-sensitive opsin 1 (364 aa).

Topologically, residues 1–52 are extracellular; sequence MAHTWGPQRLAGGQPQANFEESTQGSIFTYTNSNSTRDPFEGPNYHIAPRWV. S22 is a glycosylation site (O-linked (GlcNAc) serine). N-linked (GlcNAc...) asparagine glycosylation occurs at N34. A helical membrane pass occupies residues 53–77; sequence YHLTSAWMVFVVIASVFTNGLVLAA. At 78-89 the chain is on the cytoplasmic side; that stretch reads TMRFKKLRHPLN. A helical transmembrane segment spans residues 90 to 115; sequence WILVNLAIADLAETIIASTISVVNQM. Residues 116 to 129 lie on the Extracellular side of the membrane; the sequence is YGYFVLGHPLCVVE. A disulfide bridge connects residues C126 and C203. A helical transmembrane segment spans residues 130–149; sequence GYTVSLCGITGLWSLAIISW. Residues 150 to 168 are Cytoplasmic-facing; that stretch reads ERWMVVCKPFGNVRFDAKL. The helical transmembrane segment at 169 to 192 threads the bilayer; the sequence is ATAGIAFSWIWAAVWTAPPIFGWS. Over 193–218 the chain is Extracellular; that stretch reads RYWPHGLKTSCGPDVFSGSSYPGVQS. A helical transmembrane segment spans residues 219 to 246; it reads YMIVLMITCCFIPLSVIILCYLQVWLAI. Residues 247 to 268 are Cytoplasmic-facing; it reads RAVAKQQKESESTQKAEKEVTR. Residues 269-292 form a helical membrane-spanning segment; sequence MVMVMIFAYCLCWGPYTFFACFAA. At 293 to 300 the chain is on the extracellular side; that stretch reads AHPGYAFH. A helical transmembrane segment spans residues 301-325; sequence PLVAALPAYFAKSATIYNPIIYVFM. Residue K312 is modified to N6-(retinylidene)lysine. At 326-364 the chain is on the cytoplasmic side; it reads NRQFRNCILQLFGKKVDDSSELSSVSKTEASSVSSVSPA.

This sequence belongs to the G-protein coupled receptor 1 family. Opsin subfamily. Post-translationally, phosphorylated on some or all of the serine and threonine residues present in the C-terminal region. As to expression, the three color pigments are found in the cone photoreceptor cells.

It is found in the membrane. Its function is as follows. Visual pigments are the light-absorbing molecules that mediate vision. They consist of an apoprotein, opsin, covalently linked to cis-retinal. This is Long-wave-sensitive opsin 1 (OPN1LW) from Capra hircus (Goat).